We begin with the raw amino-acid sequence, 144 residues long: Protein cornichon homolog 1 (144 aa).

At methionine 1 to tyrosine 10 the chain is on the cytoplasmic side. The helical transmembrane segment at methionine 11 to phenylalanine 31 threads the bilayer. Over aspartate 32–tyrosine 56 the chain is Lumenal. Residues leucine 57–leucine 77 form a helical membrane-spanning segment. The Cytoplasmic segment spans residues asparagine 78 to lysine 122. A helical membrane pass occupies residues leucine 123–serine 143. Residue serine 144 is a topological domain, lumenal.

This sequence belongs to the cornichon family. In terms of assembly, interacts with AREG immature precursor and with immature TGFA, i.e. with a prosegment and lacking full N-glycosylation, but not with the fully N-glycosylated form. In the Golgi apparatus, may form a complex with GORASP55 and transmembrane TGFA.

The protein localises to the endoplasmic reticulum membrane. It is found in the golgi apparatus membrane. Functionally, involved in the selective transport and maturation of TGF-alpha family proteins. The protein is Protein cornichon homolog 1 (CNIH1) of Pongo abelii (Sumatran orangutan).